Consider the following 199-residue polypeptide: dITP/XTP pyrophosphatase (199 aa).

7–12 serves as a coordination point for substrate; it reads TGNKGK. Residue Asp71 is the Proton acceptor of the active site. Asp71 is a Mg(2+) binding site. Residues Ala72, 154–157, Lys177, and 182–183 each bind substrate; these read FGYD and HR.

This sequence belongs to the HAM1 NTPase family. In terms of assembly, homodimer. The cofactor is Mg(2+).

It carries out the reaction XTP + H2O = XMP + diphosphate + H(+). The catalysed reaction is dITP + H2O = dIMP + diphosphate + H(+). The enzyme catalyses ITP + H2O = IMP + diphosphate + H(+). Functionally, pyrophosphatase that catalyzes the hydrolysis of nucleoside triphosphates to their monophosphate derivatives, with a high preference for the non-canonical purine nucleotides XTP (xanthosine triphosphate), dITP (deoxyinosine triphosphate) and ITP. Seems to function as a house-cleaning enzyme that removes non-canonical purine nucleotides from the nucleotide pool, thus preventing their incorporation into DNA/RNA and avoiding chromosomal lesions. The sequence is that of dITP/XTP pyrophosphatase from Bdellovibrio bacteriovorus (strain ATCC 15356 / DSM 50701 / NCIMB 9529 / HD100).